A 447-amino-acid polypeptide reads, in one-letter code: Trigger factor (447 aa).

The region spanning 159–244 (GDMLLMQVES…VREIKEEKLP (86 aa)) is the PPIase FKBP-type domain.

Belongs to the FKBP-type PPIase family. Tig subfamily.

The protein resides in the cytoplasm. The catalysed reaction is [protein]-peptidylproline (omega=180) = [protein]-peptidylproline (omega=0). Involved in protein export. Acts as a chaperone by maintaining the newly synthesized protein in an open conformation. Functions as a peptidyl-prolyl cis-trans isomerase. The protein is Trigger factor of Dehalococcoides mccartyi (strain CBDB1).